We begin with the raw amino-acid sequence, 33 residues long: Photosystem II reaction center protein Psb30 (33 aa).

Residues Ile-5 to Leu-25 form a helical membrane-spanning segment.

It belongs to the Psb30/Ycf12 family. In terms of assembly, PSII is composed of 1 copy each of membrane proteins PsbA, PsbB, PsbC, PsbD, PsbE, PsbF, PsbH, PsbI, PsbJ, PsbK, PsbL, PsbM, PsbT, PsbX, PsbY, PsbZ, Psb30/Ycf12, peripheral proteins of the oxygen-evolving complex and a large number of cofactors. It forms dimeric complexes.

It localises to the plastid. Its subcellular location is the chloroplast thylakoid membrane. Its function is as follows. A core subunit of photosystem II (PSII), probably helps stabilize the reaction center. This Chaetosphaeridium globosum (Charophycean green alga) protein is Photosystem II reaction center protein Psb30.